Consider the following 638-residue polypeptide: Guanylate-binding protein 7 (638 aa).

Residues 1-310 (MASEIHMPGP…DAINSGATPC (310 aa)) are GTPase domain (Globular). A GB1/RHD3-type G domain is found at 35 to 277 (TQPVVVVAIV…FCSYIFTHAK (243 aa)). GTP is bound by residues 45–52 (GLYRTGKS), 67–69 (LGC), and 97–101 (DTEGL). The segment at 311–638 (LENAMAVLAQ…LRNPGKKIIS (328 aa)) is interaction with the CYBA-CYBB complex. The tract at residues 590–638 (PSVFSQILDVAGSIFIAALPGAAKLVDLGMKILSSLCNRLRNPGKKIIS) is C-terminal tail; required for its localization to cytoplasmic vesicle.

Belongs to the TRAFAC class dynamin-like GTPase superfamily. GB1/RHD3 GTPase family. GB1 subfamily. Monomer and dimer. Interacts with CYBA, CYBA-CYBB complex and ATG4B. Interacts (via GB1/RHD3-type G domain) with NCF2 and NCF2-NCF4 complex.

It is found in the cytoplasmic vesicle membrane. It catalyses the reaction GTP + H2O = GDP + phosphate + H(+). The catalysed reaction is GDP + H2O = GMP + phosphate + H(+). Interferon (IFN)-inducible GTPase that plays important roles in innate immunity against a diverse range of bacterial, viral and protozoan pathogens. Hydrolyzes GTP to GMP in two consecutive cleavage reactions and predominantly uses GTP and not GDP or GMP as the substrate. Following infection, recruited to the pathogen-containing vacuoles or vacuole-escaped bacteria and acts as a positive regulator of inflammasome assembly by promoting the release of inflammasome ligands from bacteria. Acts by promoting lysis of pathogen-containing vacuoles, releasing pathogens into the cytosol. Following pathogen release in the cytosol, promotes recruitment of proteins that mediate bacterial cytolysis: this liberates ligands that are detected by inflammasomes, such as lipopolysaccharide (LPS) that activates the non-canonical CASP4/CASP11 inflammasome or double-stranded DNA (dsDNA) that activates the AIM2 inflammasome. Also promotes IFN-gamma-mediated host defense against bacterial infections by regulating oxidative responses and bacteriolytic peptide generation. May help to assemble NADPH oxidase on phagosomal membranes by acting as a bridging protein between NADPH oxidase cytosolic subunits NCF2-NCF4 and the membrane subunits CYBA-CYBB. Participates along with GBP1 in trafficking monoubiquinated protein cargo to autolysosomes for generating ubiquitin-derived antimicrobial peptides. Facilitates influenza A virus replication by inhibiting the activation of NF-kappaB and JAK-STAT signaling pathways and the expression of type I, type III interferons and pro-inflammatory cytokines. Confers protection to several pathogens, including the bacterial pathogens Listeria monocytogenes and Mycobacterium bovis BCG as well as the protozoan pathogen Toxoplasma gondii. Required for disruption of the parasitophorous vacuole formed following T.gondii infection and subsequent killing of the parasite. In Homo sapiens (Human), this protein is Guanylate-binding protein 7 (GBP7).